We begin with the raw amino-acid sequence, 91 residues long: Small ribosomal subunit protein uS19 (91 aa).

The protein belongs to the universal ribosomal protein uS19 family.

Protein S19 forms a complex with S13 that binds strongly to the 16S ribosomal RNA. The protein is Small ribosomal subunit protein uS19 of Prochlorococcus marinus (strain MIT 9211).